Consider the following 194-residue polypeptide: Auxin-induced protein 22A (194 aa).

The EAR-like (transcriptional repression) motif lies at Leu13 to Leu17. Residues Glu40–Lys62 are disordered. The PB1 domain maps to Lys85–Asp173.

It belongs to the Aux/IAA family. As to quaternary structure, homodimers and heterodimers.

It is found in the nucleus. Its function is as follows. Aux/IAA proteins are short-lived transcriptional factors that function as repressors of early auxin response genes at low auxin concentrations. Repression is thought to result from the interaction with auxin response factors (ARFs), proteins that bind to the auxin-responsive promoter element (AuxRE). Formation of heterodimers with ARF proteins may alter their ability to modulate early auxin response genes expression. This chain is Auxin-induced protein 22A (AUX22A), found in Vigna radiata var. radiata (Mung bean).